A 450-amino-acid chain; its full sequence is tRNA-2-methylthio-N(6)-dimethylallyladenosine synthase (450 aa).

One can recognise an MTTase N-terminal domain in the interval 14 to 132; that stretch reads GEFFIETWGC…FPNYLNEVKK (119 aa). 6 residues coordinate [4Fe-4S] cluster: Cys23, Cys59, Cys93, Cys169, Cys173, and Cys176. A Radical SAM core domain is found at 155–385; sequence RKNSMKAFVT…VEVLNEISAK (231 aa). The TRAM domain maps to 388 to 450; sequence KAYEGKIEEV…NSFSLTGEEI (63 aa).

This sequence belongs to the methylthiotransferase family. MiaB subfamily. As to quaternary structure, monomer. [4Fe-4S] cluster is required as a cofactor.

The protein localises to the cytoplasm. The enzyme catalyses N(6)-dimethylallyladenosine(37) in tRNA + (sulfur carrier)-SH + AH2 + 2 S-adenosyl-L-methionine = 2-methylsulfanyl-N(6)-dimethylallyladenosine(37) in tRNA + (sulfur carrier)-H + 5'-deoxyadenosine + L-methionine + A + S-adenosyl-L-homocysteine + 2 H(+). Its function is as follows. Catalyzes the methylthiolation of N6-(dimethylallyl)adenosine (i(6)A), leading to the formation of 2-methylthio-N6-(dimethylallyl)adenosine (ms(2)i(6)A) at position 37 in tRNAs that read codons beginning with uridine. In Clostridium botulinum (strain ATCC 19397 / Type A), this protein is tRNA-2-methylthio-N(6)-dimethylallyladenosine synthase.